A 361-amino-acid polypeptide reads, in one-letter code: Mannose-1-phosphate guanyltransferase (361 aa).

The protein belongs to the transferase hexapeptide repeat family.

It is found in the cytoplasm. It carries out the reaction alpha-D-mannose 1-phosphate + GTP + H(+) = GDP-alpha-D-mannose + diphosphate. Its pathway is nucleotide-sugar biosynthesis; GDP-alpha-D-mannose biosynthesis; GDP-alpha-D-mannose from alpha-D-mannose 1-phosphate (GTP route): step 1/1. Functionally, involved in cell wall synthesis where it is required for glycosylation. Involved in cell cycle progression through cell-size checkpoint. This Eremothecium gossypii (strain ATCC 10895 / CBS 109.51 / FGSC 9923 / NRRL Y-1056) (Yeast) protein is Mannose-1-phosphate guanyltransferase (MPG1).